Reading from the N-terminus, the 410-residue chain is Probable inactive allantoicase (410 aa).

It belongs to the allantoicase family.

In terms of biological role, the function of this enzyme is unclear as allantoicase activity is not known to exist in mammals. The chain is Probable inactive allantoicase (ALLC) from Macaca fascicularis (Crab-eating macaque).